Reading from the N-terminus, the 113-residue chain is Nucleoid-associated protein PMT_0025 (113 aa).

This sequence belongs to the YbaB/EbfC family. As to quaternary structure, homodimer.

The protein resides in the cytoplasm. Its subcellular location is the nucleoid. Binds to DNA and alters its conformation. May be involved in regulation of gene expression, nucleoid organization and DNA protection. The protein is Nucleoid-associated protein PMT_0025 of Prochlorococcus marinus (strain MIT 9313).